Reading from the N-terminus, the 77-residue chain is U8-lycotoxin-Ls1a (77 aa).

Residues 1 to 20 form the signal peptide; sequence MKLIIFTGLVLFAIVSLIEA. A propeptide spanning residues 21-26 is cleaved from the precursor; sequence QAENEK.

It belongs to the neurotoxin 19 (CSTX) family. 08 (U8-Lctx) subfamily. Post-translationally, contains 4 disulfide bonds. As to expression, expressed by the venom gland.

The protein localises to the secreted. The protein is U8-lycotoxin-Ls1a of Lycosa singoriensis (Wolf spider).